Consider the following 140-residue polypeptide: uncharacterized protein (140 aa).

Residues 1–15 (MQRQTGHMEDKKRTG) show a composition bias toward basic and acidic residues. The interval 1–34 (MQRQTGHMEDKKRTGLESQGTENAFSDGRDGKDG) is disordered.

This is an uncharacterized protein from Gallus gallus (Chicken).